A 1043-amino-acid polypeptide reads, in one-letter code: F-box DNA helicase 1 (1043 aa).

The interval 30 to 56 (QRWTNRDPNHGLYPKPRTKRGSRGQGS) is disordered. A PIP-box motif is present at residues 57-64 (QRCIPEFF). The disordered stretch occupies residues 101 to 191 (CALPQEGSAG…QDAGDVGPDP (91 aa)). S124 is subject to Phosphoserine. The 47-residue stretch at 138–184 (SRWDGVSKKAPRHHLSVPCTRPREARQEAEDSTSRLSAESGETDQDA) folds into the F-box domain. A compositionally biased stretch (basic and acidic residues) spans 158–170 (RPREARQEAEDST). Positions 442–705 (THEQQLILNH…FYLTQSFRFG (264 aa)) constitute a UvrD-like helicase ATP-binding domain. 463–470 (AFAGTGKT) contacts ATP. An APIM motif motif is present at residues 807–811 (KFIRR).

The protein belongs to the helicase family. UvrD subfamily. As to quaternary structure, part of the SCF (SKP1-CUL1-F-box) E3 ubiquitin-protein ligase complex SCF(FBH1) composed of CUL1, SKP1, RBX1 and FBH1. Interacts with RAD51. Interacts with RPA2. Interacts (via PIP-box and RanBP2-type zinc finger) with PCNA. Post-translationally, ubiquitinated. Ubiquitination by the DCX(DTL) complex, also named CRL4(CDT2), leading to its degradation: ubiquitination takes place after its localization to DNA damage sites, possibly to facilitate the translesion synthesis (TLS) pathway.

Its subcellular location is the nucleus. The protein localises to the chromosome. It catalyses the reaction Couples ATP hydrolysis with the unwinding of duplex DNA by translocating in the 3'-5' direction.. The catalysed reaction is ATP + H2O = ADP + phosphate + H(+). The protein operates within protein modification; protein ubiquitination. Its function is as follows. 3'-5' DNA helicase and substrate-recognition component of the SCF(FBH1) E3 ubiquitin ligase complex that plays a key role in response to stalled/damaged replication forks. Involved in genome maintenance by acting as an anti-recombinogenic helicase and preventing extensive strand exchange during homologous recombination: promotes RAD51 filament dissolution from stalled forks, thereby inhibiting homologous recombination and preventing excessive recombination. Also promotes cell death and DNA double-strand breakage in response to replication stress: together with MUS81, promotes the endonucleolytic DNA cleavage following prolonged replication stress via its helicase activity, possibly to eliminate cells with excessive replication stress. Plays a major role in remodeling of stalled DNA forks by catalyzing fork regression, in which the fork reverses and the two nascent DNA strands anneal. In addition to the helicase activity, also acts as the substrate-recognition component of the SCF(FBH1) E3 ubiquitin ligase complex, a complex that mediates ubiquitination of RAD51, leading to regulate RAD51 subcellular location. This chain is F-box DNA helicase 1, found in Homo sapiens (Human).